Consider the following 99-residue polypeptide: Large ribosomal subunit protein uL23 (99 aa).

The protein belongs to the universal ribosomal protein uL23 family. As to quaternary structure, part of the 50S ribosomal subunit. Contacts protein L29, and trigger factor when it is bound to the ribosome.

In terms of biological role, one of the early assembly proteins it binds 23S rRNA. One of the proteins that surrounds the polypeptide exit tunnel on the outside of the ribosome. Forms the main docking site for trigger factor binding to the ribosome. This Shewanella woodyi (strain ATCC 51908 / MS32) protein is Large ribosomal subunit protein uL23.